The chain runs to 301 residues: Ornithine carbamoyltransferase (301 aa).

Carbamoyl phosphate contacts are provided by residues R100 and 127-130 (HPCQ). Residues N158, D221, and 225–226 (SM) each bind L-ornithine. Residues 260–261 (CL) and R288 contribute to the carbamoyl phosphate site.

Belongs to the aspartate/ornithine carbamoyltransferase superfamily. OTCase family.

It is found in the cytoplasm. It catalyses the reaction carbamoyl phosphate + L-ornithine = L-citrulline + phosphate + H(+). It functions in the pathway amino-acid biosynthesis; L-arginine biosynthesis; L-arginine from L-ornithine and carbamoyl phosphate: step 1/3. Reversibly catalyzes the transfer of the carbamoyl group from carbamoyl phosphate (CP) to the N(epsilon) atom of ornithine (ORN) to produce L-citrulline. This is Ornithine carbamoyltransferase from Shewanella oneidensis (strain ATCC 700550 / JCM 31522 / CIP 106686 / LMG 19005 / NCIMB 14063 / MR-1).